Reading from the N-terminus, the 195-residue chain is Thymidylate kinase (195 aa).

Residue 7-14 coordinates ATP; it reads GIDGVGKS.

It belongs to the thymidylate kinase family.

It carries out the reaction dTMP + ATP = dTDP + ADP. In terms of biological role, phosphorylation of dTMP to form dTDP in both de novo and salvage pathways of dTTP synthesis. This Campylobacter concisus (strain 13826) protein is Thymidylate kinase.